The sequence spans 363 residues: Pyrimidine monooxygenase RutA (363 aa).

Residues 49–50 (IK), Asn-115, Glu-124, 140–141 (RY), and Ser-190 each bind FMN.

This sequence belongs to the NtaA/SnaA/DszA monooxygenase family. RutA subfamily.

The enzyme catalyses uracil + FMNH2 + NADH + O2 = (Z)-3-ureidoacrylate + FMN + NAD(+) + H2O + H(+). It catalyses the reaction thymine + FMNH2 + NADH + O2 = (Z)-2-methylureidoacrylate + FMN + NAD(+) + H2O + H(+). Its function is as follows. Catalyzes the pyrimidine ring opening between N-3 and C-4 by an unusual flavin hydroperoxide-catalyzed mechanism, adding oxygen atoms in the process to yield ureidoacrylate peracid, that immediately reacts with FMN forming ureidoacrylate and FMN-N(5)-oxide. The FMN-N(5)-oxide reacts spontaneously with NADH to produce FMN. Requires the flavin reductase RutF to regenerate FMN in vivo. The chain is Pyrimidine monooxygenase RutA from Escherichia coli O44:H18 (strain 042 / EAEC).